Consider the following 89-residue polypeptide: Small ribosomal subunit protein uS14 (89 aa).

This sequence belongs to the universal ribosomal protein uS14 family. As to quaternary structure, part of the 30S ribosomal subunit. Contacts proteins S3 and S10.

Its function is as follows. Binds 16S rRNA, required for the assembly of 30S particles and may also be responsible for determining the conformation of the 16S rRNA at the A site. In Flavobacterium psychrophilum (strain ATCC 49511 / DSM 21280 / CIP 103535 / JIP02/86), this protein is Small ribosomal subunit protein uS14.